The sequence spans 172 residues: Small ribosomal subunit protein uS5 (172 aa).

An S5 DRBM domain is found at 16-79 (LKEKLVHINR…EDGKKNVIKV (64 aa)).

This sequence belongs to the universal ribosomal protein uS5 family. As to quaternary structure, part of the 30S ribosomal subunit. Contacts proteins S4 and S8.

Its function is as follows. With S4 and S12 plays an important role in translational accuracy. In terms of biological role, located at the back of the 30S subunit body where it stabilizes the conformation of the head with respect to the body. This chain is Small ribosomal subunit protein uS5, found in Pelodictyon phaeoclathratiforme (strain DSM 5477 / BU-1).